Consider the following 558-residue polypeptide: Formate--tetrahydrofolate ligase (558 aa).

An ATP-binding site is contributed by 65 to 72 (TPAGEGKT).

Belongs to the formate--tetrahydrofolate ligase family.

It catalyses the reaction (6S)-5,6,7,8-tetrahydrofolate + formate + ATP = (6R)-10-formyltetrahydrofolate + ADP + phosphate. The protein operates within one-carbon metabolism; tetrahydrofolate interconversion. This Methylobacterium nodulans (strain LMG 21967 / CNCM I-2342 / ORS 2060) protein is Formate--tetrahydrofolate ligase.